The following is a 759-amino-acid chain: Phosphoribosylformylglycinamidine synthase subunit PurL (759 aa).

His-46 is an active-site residue. The ATP site is built by Tyr-49 and Lys-88. Glu-90 is a binding site for Mg(2+). Substrate contacts are provided by residues Ser-91–His-94 and Arg-113. The Proton acceptor role is filled by His-92. Mg(2+) is bound at residue Asp-114. Gln-237 is a substrate binding site. Mg(2+) is bound at residue Asp-265. Glu-309–Gln-311 is a binding site for substrate. Residues Asp-498 and Gly-535 each coordinate ATP. Position 536 (Asn-536) interacts with Mg(2+). Substrate is bound at residue Ser-538.

Belongs to the FGAMS family. Monomer. Part of the FGAM synthase complex composed of 1 PurL, 1 PurQ and 2 PurS subunits.

Its subcellular location is the cytoplasm. It catalyses the reaction N(2)-formyl-N(1)-(5-phospho-beta-D-ribosyl)glycinamide + L-glutamine + ATP + H2O = 2-formamido-N(1)-(5-O-phospho-beta-D-ribosyl)acetamidine + L-glutamate + ADP + phosphate + H(+). Its pathway is purine metabolism; IMP biosynthesis via de novo pathway; 5-amino-1-(5-phospho-D-ribosyl)imidazole from N(2)-formyl-N(1)-(5-phospho-D-ribosyl)glycinamide: step 1/2. Its function is as follows. Part of the phosphoribosylformylglycinamidine synthase complex involved in the purines biosynthetic pathway. Catalyzes the ATP-dependent conversion of formylglycinamide ribonucleotide (FGAR) and glutamine to yield formylglycinamidine ribonucleotide (FGAM) and glutamate. The FGAM synthase complex is composed of three subunits. PurQ produces an ammonia molecule by converting glutamine to glutamate. PurL transfers the ammonia molecule to FGAR to form FGAM in an ATP-dependent manner. PurS interacts with PurQ and PurL and is thought to assist in the transfer of the ammonia molecule from PurQ to PurL. This chain is Phosphoribosylformylglycinamidine synthase subunit PurL, found in Anaeromyxobacter dehalogenans (strain 2CP-C).